We begin with the raw amino-acid sequence, 105 residues long: MAIRYPMAVGLNKGHRVTKNVTKPRHCRRRGRLTKHTKFVRDMIREVCGFAPYERRAMELLKVSKDKRALKFIKKRIGTHIRAKRKREELSNVLAAMRKAAAKKD.

Belongs to the eukaryotic ribosomal protein eL36 family. In terms of assembly, component of the large ribosomal subunit.

The protein resides in the cytoplasm. Its subcellular location is the cytosol. Its function is as follows. Component of the large ribosomal subunit. The ribosome is a large ribonucleoprotein complex responsible for the synthesis of proteins in the cell. The protein is Large ribosomal subunit protein eL36 (rpl36) of Xenopus laevis (African clawed frog).